A 541-amino-acid chain; its full sequence is Berberine bridge enzyme-like 24 (541 aa).

Positions 1–32 (MGNSKPLPTISCIIVSVLYFSFYCITPTSSSA) are cleaved as a signal peptide. Cys-41 and Cys-105 form a disulfide bridge. N-linked (GlcNAc...) asparagine glycosylation is present at Asn-62. The region spanning 83–259 (SMPKPGFIFR…LAWKIKLVPV (177 aa)) is the FAD-binding PCMH-type domain. The 6-(S-cysteinyl)-8alpha-(pros-histidyl)-FAD (His-Cys) cross-link spans 120 to 184 (HDFEALSYVS…KIHGFPAGLC (65 aa)). 3 N-linked (GlcNAc...) asparagine glycosylation sites follow: Asn-309, Asn-408, and Asn-435.

Belongs to the oxygen-dependent FAD-linked oxidoreductase family. Requires FAD as cofactor. In terms of processing, the FAD cofactor is bound via a bicovalent 6-S-cysteinyl, 8alpha-N1-histidyl FAD linkage.

It localises to the secreted. The protein localises to the cell wall. This chain is Berberine bridge enzyme-like 24, found in Arabidopsis thaliana (Mouse-ear cress).